Consider the following 437-residue polypeptide: Phosphoribosylamine--glycine ligase (437 aa).

One can recognise an ATP-grasp domain in the interval 109 to 316 (KDFLARHGIP…LLDLIEAALN (208 aa)). 135–196 (VRQQGAPIVI…EEYLDGEEAS (62 aa)) contacts ATP. Mg(2+)-binding residues include glutamate 286 and asparagine 288.

Belongs to the GARS family. It depends on Mg(2+) as a cofactor. Requires Mn(2+) as cofactor.

The catalysed reaction is 5-phospho-beta-D-ribosylamine + glycine + ATP = N(1)-(5-phospho-beta-D-ribosyl)glycinamide + ADP + phosphate + H(+). It functions in the pathway purine metabolism; IMP biosynthesis via de novo pathway; N(1)-(5-phospho-D-ribosyl)glycinamide from 5-phospho-alpha-D-ribose 1-diphosphate: step 2/2. The protein is Phosphoribosylamine--glycine ligase of Xylella fastidiosa (strain 9a5c).